The sequence spans 378 residues: 8-demethyl-8-alpha-L-rhamnosyl tetracenomycin-C 2'-O-methyltransferase (378 aa).

Residues 195–201 (EIGVGGY), serine 210, aspartate 227, 245–246 (DQ), and aspartate 268 each bind S-adenosyl-L-methionine. Aspartate 268 provides a ligand contact to Mg(2+). Histidine 271 functions as the Proton acceptor in the catalytic mechanism. Residues glutamate 296 and aspartate 297 each contribute to the Mg(2+) site.

This sequence belongs to the methyltransferase OleY/MycE family. Requires Mg(2+) as cofactor.

It carries out the reaction 8-demethyl-8-alpha-L-rhamnosyl-tetracenomycin C + S-adenosyl-L-methionine = 8-demethyl-8-(2-O-methyl-alpha-L-rhamnosyl)-tetracenomycin C + S-adenosyl-L-homocysteine + H(+). It functions in the pathway antibiotic biosynthesis. Its function is as follows. O-methyltransferase involved in the biosynthesis of the permethylated L-rhamnose moiety of elloramycin, an antitumor polyketide. Mediates the methylation of the hydroxy groups at the 2'-position after the sugar moiety has been attached to the aglycon. The protein is 8-demethyl-8-alpha-L-rhamnosyl tetracenomycin-C 2'-O-methyltransferase of Streptomyces olivaceus.